Reading from the N-terminus, the 460-residue chain is Kynureninase (460 aa).

Residues Leu-127, Thr-128, 165–168, Asp-249, His-252, and Tyr-274 contribute to the pyridoxal 5'-phosphate site; that span reads FPSD. Residue Lys-275 is modified to N6-(pyridoxal phosphate)lysine. Trp-304 and Asn-332 together coordinate pyridoxal 5'-phosphate.

This sequence belongs to the kynureninase family. Homodimer. The cofactor is pyridoxal 5'-phosphate.

Its subcellular location is the cytoplasm. The enzyme catalyses L-kynurenine + H2O = anthranilate + L-alanine + H(+). The catalysed reaction is 3-hydroxy-L-kynurenine + H2O = 3-hydroxyanthranilate + L-alanine + H(+). The protein operates within amino-acid degradation; L-kynurenine degradation; L-alanine and anthranilate from L-kynurenine: step 1/1. Its pathway is cofactor biosynthesis; NAD(+) biosynthesis; quinolinate from L-kynurenine: step 2/3. In terms of biological role, catalyzes the cleavage of L-kynurenine (L-Kyn) and L-3-hydroxykynurenine (L-3OHKyn) into anthranilic acid (AA) and 3-hydroxyanthranilic acid (3-OHAA), respectively. This Monosiga brevicollis (Choanoflagellate) protein is Kynureninase.